We begin with the raw amino-acid sequence, 438 residues long: Phosphoribosylamine--glycine ligase (438 aa).

Positions 108 to 316 (REFMERNNIP…LLEIAKGIVE (209 aa)) constitute an ATP-grasp domain. Position 135–194 (135–194 (IDEYGKPVVVKPLGLTGGKGVKVVGYQLKDNEEAKEYAEHIIRKDGKVLIEERTDGVEFT)) interacts with ATP. 3 residues coordinate Mg(2+): glutamine 274, glutamate 286, and asparagine 288. Mn(2+) is bound by residues glutamine 274, glutamate 286, and asparagine 288.

The protein belongs to the GARS family. The cofactor is Mg(2+). It depends on Mn(2+) as a cofactor.

It carries out the reaction 5-phospho-beta-D-ribosylamine + glycine + ATP = N(1)-(5-phospho-beta-D-ribosyl)glycinamide + ADP + phosphate + H(+). It participates in purine metabolism; IMP biosynthesis via de novo pathway; N(1)-(5-phospho-D-ribosyl)glycinamide from 5-phospho-alpha-D-ribose 1-diphosphate: step 2/2. The protein is Phosphoribosylamine--glycine ligase of Pyrococcus horikoshii (strain ATCC 700860 / DSM 12428 / JCM 9974 / NBRC 100139 / OT-3).